A 388-amino-acid polypeptide reads, in one-letter code: MIYLVISVFLITAFICLYLKKDIFYPAVCVNIIFALVLLGYEITSDIYAFQLNDATLIFLLCNVLTFTLSCLLTESVLDLNIRKVNNAIYSIPSKKVHNVGLLVISFSMIYICMRLSNYQFGTSLLSYMNLIRDADVEDTSRNFSAYMQPIILTTFALFIWSKKFTNTKVSKTFTLLVFIVFIFAIILNTGKQIVFMVIISYAFIVGVNRVKHYVYLITAVGVLFSLYMLFLRGLPGGMAYYLSMYLVSPIIAFQEFYFQQVSNSASSHVFWFFERLMGLLTGGVSMSLHKEFVWVGLPTNVYTAFSDYVYISAELSYLMMVIHGCISGVLWRLSRNYISVKIFYSYFIYTFSFIFYHESFMTNISSWIQITLCIIVFSQFLKAQKIK.

9 helical membrane passes run 23–43, 57–77, 97–117, 143–163, 180–200, 215–235, 312–332, 338–358, and 361–381; these read IFYP…GYEI, LIFL…TESV, VHNV…MRLS, NFSA…IWSK, IVFI…MVII, VYLI…LRGL, ISAE…GVLW, YISV…IFYH, and FMTN…FSQF.

The protein resides in the cell inner membrane. Its function is as follows. May function in vitro as a polymerase that catalyzes the polymerization of the O-antigen repeat units on the periplasmic face of the inner membrane, leading to the formation of the lipid-linked O-antigen molecule. However, E.coli K12 strains do not normally produce the O-antigen in vivo due to mutations in the rfb gene cluster. K12 strains are phenotypically rough, their lipopolysaccharide having a complete core structure, but no O-antigen. This is Putative O-antigen polymerase from Escherichia coli (strain K12).